The sequence spans 291 residues: Bifunctional protein FolD (291 aa).

NADP(+) contacts are provided by residues 168-170, T195, and V236; that span reads GRG.

This sequence belongs to the tetrahydrofolate dehydrogenase/cyclohydrolase family. As to quaternary structure, homodimer.

The catalysed reaction is (6R)-5,10-methylene-5,6,7,8-tetrahydrofolate + NADP(+) = (6R)-5,10-methenyltetrahydrofolate + NADPH. It carries out the reaction (6R)-5,10-methenyltetrahydrofolate + H2O = (6R)-10-formyltetrahydrofolate + H(+). Its pathway is one-carbon metabolism; tetrahydrofolate interconversion. Functionally, catalyzes the oxidation of 5,10-methylenetetrahydrofolate to 5,10-methenyltetrahydrofolate and then the hydrolysis of 5,10-methenyltetrahydrofolate to 10-formyltetrahydrofolate. The chain is Bifunctional protein FolD from Bifidobacterium adolescentis (strain ATCC 15703 / DSM 20083 / NCTC 11814 / E194a).